Consider the following 320-residue polypeptide: Cytochrome f (320 aa).

The N-terminal stretch at 1–35 is a signal peptide; it reads MQNRNTFLGVKEQITRSIFVSIMIYVITRASISNA. Heme is bound by residues tyrosine 36, cysteine 56, cysteine 59, and histidine 60. The helical transmembrane segment at 286–306 threads the bilayer; the sequence is IQGLLFFLASVILAQIFLVLK.

This sequence belongs to the cytochrome f family. In terms of assembly, the 4 large subunits of the cytochrome b6-f complex are cytochrome b6, subunit IV (17 kDa polypeptide, petD), cytochrome f and the Rieske protein, while the 4 small subunits are PetG, PetL, PetM and PetN. The complex functions as a dimer. Heme is required as a cofactor.

It is found in the plastid. Its subcellular location is the chloroplast thylakoid membrane. In terms of biological role, component of the cytochrome b6-f complex, which mediates electron transfer between photosystem II (PSII) and photosystem I (PSI), cyclic electron flow around PSI, and state transitions. The chain is Cytochrome f from Dioscorea elephantipes (Elephant's foot yam).